The sequence spans 324 residues: Archaeosine synthase subunit beta (324 aa).

The Radical SAM core domain maps to glycine 12–asparagine 254. The [4Fe-4S] cluster site is built by cysteine 27, cysteine 36, and cysteine 39.

This sequence belongs to the radical SAM superfamily. RaSEA family. As to quaternary structure, forms a robust complex with the archaeosine synthase alpha subunit ArcS, likely an alpha(2)beta(2) heterotetrameric structure. It depends on [4Fe-4S] cluster as a cofactor.

It carries out the reaction 7-N-[(5S)-5-amino-5-carboxypentyl]formamidino-7-deazaguanosine(15) in tRNA + S-adenosyl-L-methionine = archaeosine(15) in tRNA + L-1-piperideine-6-carboxylate + 5'-deoxyadenosine + L-methionine + 2 H(+). It participates in tRNA modification; archaeosine-tRNA biosynthesis. Radical SAM enzyme involved in the synthesis of archaeosine, a modified nucleoside present in the dihydrouridine loop (D-loop) of archaeal tRNAs. Catalyzes the cleavage of the C(epsilon)-N bond of the lysine moiety of q0kN15-tRNA, leading to the formation of archaeosine at position 15 in tRNAs. The sequence is that of Archaeosine synthase subunit beta from Thermococcus kodakarensis (strain ATCC BAA-918 / JCM 12380 / KOD1) (Pyrococcus kodakaraensis (strain KOD1)).